Reading from the N-terminus, the 346-residue chain is Blue-light-activated histidine kinase 2 (346 aa).

Positions 8-82 (HDKEAWGRLP…KAIRNCEEVE (75 aa)) constitute a PAS domain. Cys-55 is modified (S-4a-FMN cysteine). In terms of domain architecture, PAC spans 79 to 133 (EEVEETIYNYRADGEGFWNHLLMGPLEDQDEKCRYFVGIQVDMGQSESPDRATEL). One can recognise a Histidine kinase domain in the interval 139–334 (EVQHRVKNHL…IVNIDIPLSQ (196 aa)). At His-142 the chain carries Phosphohistidine; by autocatalysis.

FMN binds covalently to cysteine after exposure to blue light and this bond is spontaneously broken in the dark.

It carries out the reaction ATP + protein L-histidine = ADP + protein N-phospho-L-histidine.. Functionally, photosensitive kinase that is involved in increased bacterial virulence upon exposure to light. The protein is Blue-light-activated histidine kinase 2 of Erythrobacter litoralis (strain HTCC2594).